A 147-amino-acid chain; its full sequence is Interleukin-4 (147 aa).

An N-terminal signal peptide occupies residues 1–19 (MGLRPQLAAILLCLLACTG). N-linked (GlcNAc...) asparagine glycans are attached at residues Asn-20, Asn-61, Asn-90, and Asn-117. Cystine bridges form between Cys-47–Cys-87 and Cys-69–Cys-114.

The protein belongs to the IL-4/IL-13 family.

It is found in the secreted. Its function is as follows. Participates in at least several B-cell activation processes as well as of other cell types. It is a costimulator of DNA-synthesis. It induces the expression of class II MHC molecules on resting B-cells. It enhances both secretion and cell surface expression of IgE and IgG1. It also regulates the expression of the low affinity Fc receptor for IgE (CD23) on both lymphocytes and monocytes. Positively regulates IL31RA expression in macrophages. Stimulates autophagy in dendritic cells by interfering with mTORC1 signaling and through the induction of RUFY4. This is Interleukin-4 (IL4) from Mesocricetus auratus (Golden hamster).